Reading from the N-terminus, the 118-residue chain is Ribonuclease P protein component (118 aa).

Belongs to the RnpA family. As to quaternary structure, consists of a catalytic RNA component (M1 or rnpB) and a protein subunit.

The catalysed reaction is Endonucleolytic cleavage of RNA, removing 5'-extranucleotides from tRNA precursor.. Its function is as follows. RNaseP catalyzes the removal of the 5'-leader sequence from pre-tRNA to produce the mature 5'-terminus. It can also cleave other RNA substrates such as 4.5S RNA. The protein component plays an auxiliary but essential role in vivo by binding to the 5'-leader sequence and broadening the substrate specificity of the ribozyme. The sequence is that of Ribonuclease P protein component from Rickettsia canadensis (strain McKiel).